A 249-amino-acid chain; its full sequence is Probable transcriptional regulatory protein LIC_12886 (249 aa).

The protein belongs to the TACO1 family.

It localises to the cytoplasm. This is Probable transcriptional regulatory protein LIC_12886 from Leptospira interrogans serogroup Icterohaemorrhagiae serovar copenhageni (strain Fiocruz L1-130).